The chain runs to 387 residues: Proteinase R (387 aa).

Positions 1-21 (MRLSILLGLLPLAPRPPAVDA) are cleaved as a signal peptide. Positions 22–108 (VEQRSEPAPL…IEQDAIVNIN (87 aa)) are excised as a propeptide. The Inhibitor I9 domain maps to 42–107 (KYIVKLKEGS…YIEQDAIVNI (66 aa)). The Peptidase S8 domain maps to 115-387 (PWGLARISST…NLLAYNNYQG (273 aa)). Ca(2+) is bound at residue Thr-124. Intrachain disulfides connect Cys-142/Cys-231 and Cys-286/Cys-357. Catalysis depends on charge relay system residues Asp-147 and His-177. Residue Asp-308 participates in Ca(2+) binding. Residue Ser-332 is the Charge relay system of the active site. Residue Asp-368 participates in Ca(2+) binding.

This sequence belongs to the peptidase S8 family. The cofactor is Ca(2+).

Functionally, serine proteinase. The polypeptide is Proteinase R (PROR) (Parengyodontium album (Tritirachium album)).